The sequence spans 101 residues: Small ribosomal subunit protein uS14 (101 aa).

This sequence belongs to the universal ribosomal protein uS14 family. As to quaternary structure, part of the 30S ribosomal subunit. Contacts proteins S3 and S10.

Its function is as follows. Binds 16S rRNA, required for the assembly of 30S particles and may also be responsible for determining the conformation of the 16S rRNA at the A site. This Shewanella halifaxensis (strain HAW-EB4) protein is Small ribosomal subunit protein uS14.